The primary structure comprises 1529 residues: DNA (cytosine-5)-methyltransferase 1B (1529 aa).

Disordered stretches follow at residues 1-56 (MVKS…RAAC) and 674-706 (DDELEENEDEDAEEEAQIEEENVSKTPPSTRSR). A compositionally biased stretch (basic and acidic residues) spans 21 to 35 (QKKDEDTTDKGKLDE). Residues 674 to 694 (DDELEENEDEDAEEEAQIEEE) show a composition bias toward acidic residues. The segment covering 697 to 706 (SKTPPSTRSR) has biased composition (polar residues). BAH domains are found at residues 741-873 (LRIN…FSLP) and 910-1049 (ITYN…KQLP). One can recognise an SAM-dependent MTase C5-type domain in the interval 1093 to 1527 (LATLDIFAGC…RKLKEAVDAK (435 aa)). Residue Cys1198 is part of the active site.

The protein belongs to the class I-like SAM-binding methyltransferase superfamily. C5-methyltransferase family. As to expression, expressed in roots and inflorescences. Expressed in roots, panicles, anthers, pistils, endosperm and imbibed embryos. Expressed in tissues containing actively replicating and dividing cells, such as shoot and root meristems.

The protein localises to the nucleus. The catalysed reaction is a 2'-deoxycytidine in DNA + S-adenosyl-L-methionine = a 5-methyl-2'-deoxycytidine in DNA + S-adenosyl-L-homocysteine + H(+). Its function is as follows. Major CG methylase that methylates chromatin CpG residues and maintains DNA methylation. Plays a major role in genomic imprinting, regulation of embryogenesis and seed viability. Maintains DNA methylation at the FIE1 gene locus in the embryo. This chain is DNA (cytosine-5)-methyltransferase 1B (MET1B), found in Oryza sativa subsp. japonica (Rice).